A 173-amino-acid chain; its full sequence is Translation initiation factor IF-3 (173 aa).

It belongs to the IF-3 family. Monomer.

It is found in the cytoplasm. In terms of biological role, IF-3 binds to the 30S ribosomal subunit and shifts the equilibrium between 70S ribosomes and their 50S and 30S subunits in favor of the free subunits, thus enhancing the availability of 30S subunits on which protein synthesis initiation begins. The polypeptide is Translation initiation factor IF-3 (Ehrlichia ruminantium (strain Gardel)).